Here is a 247-residue protein sequence, read N- to C-terminus: Small ribosomal subunit protein uS2 (247 aa).

Belongs to the universal ribosomal protein uS2 family.

This Cupriavidus pinatubonensis (strain JMP 134 / LMG 1197) (Cupriavidus necator (strain JMP 134)) protein is Small ribosomal subunit protein uS2.